A 326-amino-acid polypeptide reads, in one-letter code: Biotin synthase (326 aa).

The region spanning 51–275 (NAVQRSTLLS…MMPTSFVRLS (225 aa)) is the Radical SAM core domain. The [4Fe-4S] cluster site is built by cysteine 66, cysteine 70, and cysteine 73. [2Fe-2S] cluster contacts are provided by cysteine 110, cysteine 141, cysteine 201, and arginine 273.

Belongs to the radical SAM superfamily. Biotin synthase family. In terms of assembly, homodimer. Requires [4Fe-4S] cluster as cofactor. It depends on [2Fe-2S] cluster as a cofactor.

The catalysed reaction is (4R,5S)-dethiobiotin + (sulfur carrier)-SH + 2 reduced [2Fe-2S]-[ferredoxin] + 2 S-adenosyl-L-methionine = (sulfur carrier)-H + biotin + 2 5'-deoxyadenosine + 2 L-methionine + 2 oxidized [2Fe-2S]-[ferredoxin]. It functions in the pathway cofactor biosynthesis; biotin biosynthesis; biotin from 7,8-diaminononanoate: step 2/2. Functionally, catalyzes the conversion of dethiobiotin (DTB) to biotin by the insertion of a sulfur atom into dethiobiotin via a radical-based mechanism. The protein is Biotin synthase of Aromatoleum aromaticum (strain DSM 19018 / LMG 30748 / EbN1) (Azoarcus sp. (strain EbN1)).